Consider the following 252-residue polypeptide: 2-succinyl-6-hydroxy-2,4-cyclohexadiene-1-carboxylate synthase (252 aa).

It belongs to the AB hydrolase superfamily. MenH family. In terms of assembly, monomer.

It catalyses the reaction 5-enolpyruvoyl-6-hydroxy-2-succinyl-cyclohex-3-ene-1-carboxylate = (1R,6R)-6-hydroxy-2-succinyl-cyclohexa-2,4-diene-1-carboxylate + pyruvate. The protein operates within quinol/quinone metabolism; 1,4-dihydroxy-2-naphthoate biosynthesis; 1,4-dihydroxy-2-naphthoate from chorismate: step 3/7. It functions in the pathway quinol/quinone metabolism; menaquinone biosynthesis. Functionally, catalyzes a proton abstraction reaction that results in 2,5-elimination of pyruvate from 2-succinyl-5-enolpyruvyl-6-hydroxy-3-cyclohexene-1-carboxylate (SEPHCHC) and the formation of 2-succinyl-6-hydroxy-2,4-cyclohexadiene-1-carboxylate (SHCHC). In Shigella boydii serotype 4 (strain Sb227), this protein is 2-succinyl-6-hydroxy-2,4-cyclohexadiene-1-carboxylate synthase.